A 278-amino-acid polypeptide reads, in one-letter code: Urease accessory protein UreD (278 aa).

Belongs to the UreD family. As to quaternary structure, ureD, UreF and UreG form a complex that acts as a GTP-hydrolysis-dependent molecular chaperone, activating the urease apoprotein by helping to assemble the nickel containing metallocenter of UreC. The UreE protein probably delivers the nickel.

The protein resides in the cytoplasm. In terms of biological role, required for maturation of urease via the functional incorporation of the urease nickel metallocenter. This is Urease accessory protein UreD from Staphylococcus epidermidis (strain ATCC 12228 / FDA PCI 1200).